A 628-amino-acid chain; its full sequence is 2-oxoacid:ferredoxin oxidoreductase 2, subunit alpha (628 aa).

Residues 254–258 carry the YPITP motif motif; that stretch reads YPITP. Thr-257 and Arg-344 together coordinate substrate.

As to quaternary structure, heterodimer composed of an alpha and a beta subunit.

It catalyses the reaction a 2-oxocarboxylate + 2 oxidized [2Fe-2S]-[ferredoxin] + CoA = an acyl-CoA + 2 reduced [2Fe-2S]-[ferredoxin] + CO2 + H(+). In terms of biological role, catalyzes the coenzyme A-dependent oxidative decarboxylation of different 2-oxoacids such as 2-oxoglutarate, pyruvate and 2-oxobutyrate to form their CoA derivatives. This Sulfurisphaera tokodaii (strain DSM 16993 / JCM 10545 / NBRC 100140 / 7) (Sulfolobus tokodaii) protein is 2-oxoacid:ferredoxin oxidoreductase 2, subunit alpha.